We begin with the raw amino-acid sequence, 243 residues long: Voltage-gated monoatomic cation channel TMEM109 (243 aa).

The signal sequence occupies residues 1–33; that stretch reads MAASSISSPWGKHVFKAILMVLVALILLHSALA. At 34 to 83 the chain is on the lumenal side; it reads QSRRDFAPPGQQKREAPVDVLTQIGRSVRGTLDAWIGPETMHLVSESSSQ. Residues 84-104 form a helical membrane-spanning segment; the sequence is VLWAISSAISVAFFALSGIAA. At 105-135 the chain is on the cytoplasmic side; it reads QLLNALGLAGDYLAQGLKLSPGQVQTFLLWG. The helical transmembrane segment at 136 to 156 threads the bilayer; the sequence is AGALVVYWLLSLLLGLVLALL. At 157 to 185 the chain is on the lumenal side; it reads GRILWGLKLVIFLAGFVALMRSVPDPSTR. The chain crosses the membrane as a helical span at residues 186–205; the sequence is ALLLLALLILYALLSRLTGS. Topologically, residues 206–243 are cytoplasmic; that stretch reads RASGAQLEAKVRGLERQVEELRWRQRRAAKGARSVEEE.

Homooligomer. Interacts with CRYAB; in the cellular response to DNA damage.

The protein localises to the nucleus outer membrane. It localises to the endoplasmic reticulum membrane. The protein resides in the sarcoplasmic reticulum membrane. It carries out the reaction K(+)(in) = K(+)(out). It catalyses the reaction Ca(2+)(in) = Ca(2+)(out). In terms of biological role, functions as a voltage-gated monoatomic cation channel permeable to both potassium and calcium. Plays a role in the cellular response to DNA damage. The protein is Voltage-gated monoatomic cation channel TMEM109 of Homo sapiens (Human).